The sequence spans 78 residues: uncharacterized protein (78 aa).

This is an uncharacterized protein from Schizosaccharomyces pombe (strain 972 / ATCC 24843) (Fission yeast).